Reading from the N-terminus, the 155-residue chain is Small ribosomal subunit protein uS7c (155 aa).

It belongs to the universal ribosomal protein uS7 family. Part of the 30S ribosomal subunit.

It is found in the plastid. Its subcellular location is the chloroplast. One of the primary rRNA binding proteins, it binds directly to 16S rRNA where it nucleates assembly of the head domain of the 30S subunit. The sequence is that of Small ribosomal subunit protein uS7c (rps7) from Ananas comosus (Pineapple).